Reading from the N-terminus, the 414-residue chain is Na(+)/H(+) antiporter NhaA (414 aa).

Transmembrane regions (helical) follow at residues 22–42, 61–81, 101–121, 131–151, 171–191, 215–235, 239–259, 281–301, 308–328, 343–363, and 379–399; these read VGGF…NSPF, LHLT…FFVV, MLPI…YAAF, GWGI…AVVG, LGAI…LPLI, SAAL…WALV, GVHA…VPLA, VLPV…LGAV, LGII…GSWV, WIDI…SLLI, and KAGV…VLAV.

It belongs to the NhaA Na(+)/H(+) (TC 2.A.33) antiporter family.

The protein resides in the cell membrane. The enzyme catalyses Na(+)(in) + 2 H(+)(out) = Na(+)(out) + 2 H(+)(in). In terms of biological role, na(+)/H(+) antiporter that extrudes sodium in exchange for external protons. The chain is Na(+)/H(+) antiporter NhaA from Thermobifida fusca (strain YX).